The following is a 1148-amino-acid chain: Phospholipid-transporting ATPase IB (1148 aa).

Topologically, residues 1-54 (MSRATSVGDQLDVPARTIYLNQPHLNKFCDNQISTAKYSVVTFLPRFLYEQIRR) are cytoplasmic. The residue at position 5 (T5) is a Phosphothreonine. The chain crosses the membrane as a helical span at residues 55–75 (AANAFFLFIALLQQIPDVSPT). At 76–79 (GRYT) the chain is on the exoplasmic loop side. A helical membrane pass occupies residues 80-100 (TLVPLIIILTIAGIKEIVEDF). At 101–276 (KRHKADNAVN…SNVEKVTNVQ (176 aa)) the chain is on the cytoplasmic side. A helical transmembrane segment spans residues 277–297 (ILVLFGILLVMALVSSVGALY). The Exoplasmic loop segment spans residues 298–324 (WNGSQGGKNWYIKKMDATSDNFGYNLL). The chain crosses the membrane as a helical span at residues 325 to 345 (TFIILYNNLIPISLLVTLEVV). At 346 to 847 (KYTQALFINW…CILYCFYKNV (502 aa)) the chain is on the cytoplasmic side. The active-site 4-aspartylphosphate intermediate is D388. ATP is bound by residues D388, K389, T390, E488, F529, K552, R585, T665, G666, D667, R755, and K761. Residue D388 coordinates Mg(2+). Residue T390 coordinates Mg(2+). D781 contributes to the Mg(2+) binding site. ATP contacts are provided by N784 and D785. Mg(2+) is bound at residue D785. A helical transmembrane segment spans residues 848–868 (VLYIIELWFAFVNGFSGQILF). Residues 869-870 (ER) lie on the Exoplasmic loop side of the membrane. The chain crosses the membrane as a helical span at residues 871–891 (WCIGLYNVIFTALPPFTLGIF). At 892-919 (ERSCSQESMLRFPQLYKITQNAEGFNTK) the chain is on the cytoplasmic side. A helical membrane pass occupies residues 920–940 (VFWGHCINALVHSLILFWFPM). The Exoplasmic loop portion of the chain corresponds to 941-957 (KALEHDTVLANGHATDY). A helical transmembrane segment spans residues 958 to 978 (LFVGNIVYTYVVVTVCLKAGL). Residues 979–988 (ETTAWTKFSH) are Cytoplasmic-facing. The helical transmembrane segment at 989 to 1009 (LAVWGSMLIWLVFFGIYSTIW) threads the bilayer. Over 1010-1023 (PTIPIAPDMKGQAT) the chain is Exoplasmic loop. A helical membrane pass occupies residues 1024–1044 (MVLSSAHFWLGLFLVPTACLI). The Cytoplasmic portion of the chain corresponds to 1045 to 1148 (EDVAWRAAKH…DTTKQKSRKK (104 aa)). The segment at 1102–1126 (PPTLFRGSSLQQSMPHGYAFSQEEH) is disordered.

This sequence belongs to the cation transport ATPase (P-type) (TC 3.A.3) family. Type IV subfamily. Component of a P4-ATPase flippase complex which consists of a catalytic alpha subunit and an accessory beta subunit. Interacts with TMEM30A to form a flippase complex. Mg(2+) is required as a cofactor. As to expression, expressed in retinal photoreceptor cells and testis.

Its subcellular location is the membrane. The protein resides in the golgi apparatus membrane. The protein localises to the endosome membrane. It localises to the cell membrane. It is found in the photoreceptor outer segment membrane. Its subcellular location is the photoreceptor inner segment membrane. The enzyme catalyses ATP + H2O + phospholipidSide 1 = ADP + phosphate + phospholipidSide 2.. It catalyses the reaction a 1,2-diacyl-sn-glycero-3-phospho-L-serine(out) + ATP + H2O = a 1,2-diacyl-sn-glycero-3-phospho-L-serine(in) + ADP + phosphate + H(+). The catalysed reaction is a 1,2-diacyl-sn-glycero-3-phosphoethanolamine(in) + ATP + H2O = a 1,2-diacyl-sn-glycero-3-phosphoethanolamine(out) + ADP + phosphate + H(+). ATPase activity is stimulated by phosphatidylserine (PS) and minimally by phosphatidylethanolamine (PE). ATPase activity is inhibited by N-ethylmaleimide (NEM) and vanadate. Flippase activity is inhibited by NEM and 1,2-dioleoyl-sn-glycero-3-phospho-L-serine (DOPS). In terms of biological role, catalytic component of a P4-ATPase flippase complex which catalyzes the hydrolysis of ATP coupled to the transport of aminophospholipids from the outer to the inner leaflet of various membranes and ensures the maintenance of asymmetric distribution of phospholipids. Able to translocate phosphatidylserine, but not phosphatidylcholine. Phospholipid translocation seems also to be implicated in vesicle formation and in uptake of lipid signaling molecules. Reconstituted to liposomes, the ATP8A2:TMEM30A flippase complex predominantly transports phosphatidylserine (PS) and to a lesser extent phosphatidylethanolamine (PE). Phospholipid translocation is not associated with a countertransport of an inorganic ion or other charged substrate from the cytoplasmic side toward the exoplasm in connection with the phosphorylation from ATP. ATP8A2:TMEM30A may be involved in regulation of neurite outgrowth. Proposed to function in the generation and maintenance of phospholipid asymmetry in photoreceptor disk membranes and neuronal axon membranes. May be involved in vesicle trafficking in neuronal cells. Required for normal visual and auditory function; involved in photoreceptor and inner ear spiral ganglion cell survival. The polypeptide is Phospholipid-transporting ATPase IB (Bos taurus (Bovine)).